A 567-amino-acid chain; its full sequence is Proline--tRNA ligase (567 aa).

Belongs to the class-II aminoacyl-tRNA synthetase family. ProS type 1 subfamily. As to quaternary structure, homodimer.

Its subcellular location is the cytoplasm. The catalysed reaction is tRNA(Pro) + L-proline + ATP = L-prolyl-tRNA(Pro) + AMP + diphosphate. Functionally, catalyzes the attachment of proline to tRNA(Pro) in a two-step reaction: proline is first activated by ATP to form Pro-AMP and then transferred to the acceptor end of tRNA(Pro). As ProRS can inadvertently accommodate and process non-cognate amino acids such as alanine and cysteine, to avoid such errors it has two additional distinct editing activities against alanine. One activity is designated as 'pretransfer' editing and involves the tRNA(Pro)-independent hydrolysis of activated Ala-AMP. The other activity is designated 'posttransfer' editing and involves deacylation of mischarged Ala-tRNA(Pro). The misacylated Cys-tRNA(Pro) is not edited by ProRS. This is Proline--tRNA ligase from Campylobacter fetus subsp. fetus (strain 82-40).